We begin with the raw amino-acid sequence, 557 residues long: Formate--tetrahydrofolate ligase 2 (557 aa).

66–73 (TPAGEGKT) is an ATP binding site.

Belongs to the formate--tetrahydrofolate ligase family.

It carries out the reaction (6S)-5,6,7,8-tetrahydrofolate + formate + ATP = (6R)-10-formyltetrahydrofolate + ADP + phosphate. It functions in the pathway one-carbon metabolism; tetrahydrofolate interconversion. In Streptococcus pyogenes serotype M4 (strain MGAS10750), this protein is Formate--tetrahydrofolate ligase 2.